The sequence spans 376 residues: GTPase Obg (376 aa).

The 158-residue stretch at 1 to 158 (MFIDSVNLTL…RDVRLELKLI (158 aa)) folds into the Obg domain. The OBG-type G domain occupies 159 to 359 (ADVGLVGFPN…LKFSLLELLK (201 aa)). GTP is bound by residues 165–172 (GFPNVGKS), 190–194 (FTTLT), 212–215 (DIPG), 280–283 (TRMD), and 340–342 (SSA). Residues Ser-172 and Thr-192 each coordinate Mg(2+).

The protein belongs to the TRAFAC class OBG-HflX-like GTPase superfamily. OBG GTPase family. In terms of assembly, monomer. Requires Mg(2+) as cofactor.

It localises to the cytoplasm. An essential GTPase which binds GTP, GDP and possibly (p)ppGpp with moderate affinity, with high nucleotide exchange rates and a fairly low GTP hydrolysis rate. Plays a role in control of the cell cycle, stress response, ribosome biogenesis and in those bacteria that undergo differentiation, in morphogenesis control. The polypeptide is GTPase Obg (Campylobacter curvus (strain 525.92)).